The sequence spans 563 residues: Kdo(2)-lipid A phosphoethanolamine 7''-transferase (563 aa).

The Cytoplasmic portion of the chain corresponds to 1–9 (MRYIKSITQ). The helical transmembrane segment at 10 to 30 (QKLSFLLAIYIGLFMNGAVFY) threads the bilayer. At 31-48 (RRFGSYAHDFTVWKGISA) the chain is on the periplasmic side. The helical transmembrane segment at 49 to 69 (VVELAATVLVTFFLLRLLSLF) threads the bilayer. Residues 70–79 (GRRSWRILAS) are Cytoplasmic-facing. Residues 80 to 100 (LVVLFSAGASYYMTFLNVVIG) form a helical membrane-spanning segment. At 101-117 (YGIIASVMTTDIDLSKE) the chain is on the periplasmic side. The chain crosses the membrane as a helical span at residues 118–138 (VVGLNFILWLIAVSALPLILI). Over 139-159 (WNNRCRYTLLRQLRTPGQRIR) the chain is Cytoplasmic. Residues 160–180 (SLAVVVLAGIMVWAPIRLLDI) traverse the membrane as a helical segment. Residues 181–563 (QQKKVERATG…IPQAKEAAAN (383 aa)) are Periplasmic-facing.

This sequence belongs to the phosphoethanolamine transferase family. EptB subfamily. It depends on Ca(2+) as a cofactor.

It localises to the cell inner membrane. It catalyses the reaction alpha-Kdo-(2-&gt;4)-alpha-Kdo-(2-&gt;6)-lipid A (E. coli) + a 1,2-diacyl-sn-glycero-3-phosphoethanolamine = 7-O-[2-aminoethoxy(hydroxy)phosphoryl]-alpha-Kdo-(2-&gt;4)-alpha-Kdo-(2-&gt;6)-lipid A + a 1,2-diacyl-sn-glycerol. The enzyme catalyses alpha-Kdo-(2-&gt;4)-alpha-Kdo-(2-&gt;6)-lipid IVA (E. coli) + a 1,2-diacyl-sn-glycero-3-phosphoethanolamine = 7-O-[2-aminoethoxy(hydroxy)phosphoryl]-alpha-Kdo-(2-&gt;4)-alpha-Kdo-(2-&gt;6)-lipid IVA (E. coli) + a 1,2-diacyl-sn-glycerol. Inhibited by calcium concentrations higher than 1 mM. In terms of biological role, catalyzes the addition of a phosphoethanolamine (pEtN) moiety to the outer 3-deoxy-D-manno-octulosonic acid (Kdo) residue of a Kdo(2)-lipid A. Phosphatidylethanolamines with one unsaturated acyl group function as pEtN donors and the reaction releases diacylglycerol. The chain is Kdo(2)-lipid A phosphoethanolamine 7''-transferase (eptB) from Escherichia coli (strain K12).